Here is a 163-residue protein sequence, read N- to C-terminus: Protein LOL5 (163 aa).

Composition is skewed to polar residues over residues 1–25 (MSQL…QPQS) and 33–44 (LQPQHPPSSTAH). A disordered region spans residues 1 to 51 (MSQLPLASQATTTDLVSTTAMQPQSEGIVDESLQPQHPPSSTAHDSPCLQD). Putative zinc finger regions lie at residues 70–100 (QMVC…MNYV) and 108–138 (KVHC…VTEI).

The protein resides in the nucleus. Its function is as follows. Involved in plant growth and disease resistance. This chain is Protein LOL5 (LOL5), found in Oryza sativa subsp. japonica (Rice).